The chain runs to 319 residues: Curved DNA-binding protein (319 aa).

In terms of domain architecture, J spans 5–69; the sequence is DYYKILGVEP…QKRAEFDEIR (65 aa).

It localises to the cytoplasm. The protein localises to the nucleoid. Its function is as follows. DNA-binding protein that preferentially recognizes a curved DNA sequence. It is probably a functional analog of DnaJ; displays overlapping activities with DnaJ, but functions under different conditions, probably acting as a molecular chaperone in an adaptive response to environmental stresses other than heat shock. Lacks autonomous chaperone activity; binds native substrates and targets them for recognition by DnaK. Its activity is inhibited by the binding of CbpM. This chain is Curved DNA-binding protein, found in Pseudomonas putida (strain ATCC 700007 / DSM 6899 / JCM 31910 / BCRC 17059 / LMG 24140 / F1).